A 199-amino-acid polypeptide reads, in one-letter code: Probable septum site-determining protein MinC (199 aa).

Belongs to the MinC family. Interacts with MinD and FtsZ.

Its function is as follows. Cell division inhibitor that blocks the formation of polar Z ring septums. Rapidly oscillates between the poles of the cell to destabilize FtsZ filaments that have formed before they mature into polar Z rings. Prevents FtsZ polymerization. The sequence is that of Probable septum site-determining protein MinC from Persephonella marina (strain DSM 14350 / EX-H1).